A 63-amino-acid chain; its full sequence is Keratin-associated protein 19-8 (63 aa).

Belongs to the KRTAP type 19 family. In terms of assembly, interacts with hair keratins.

In the hair cortex, hair keratin intermediate filaments are embedded in an interfilamentous matrix, consisting of hair keratin-associated proteins (KRTAP), which are essential for the formation of a rigid and resistant hair shaft through their extensive disulfide bond cross-linking with abundant cysteine residues of hair keratins. The matrix proteins include the high-sulfur and high-glycine-tyrosine keratins. This is Keratin-associated protein 19-8 (KRTAP19-8) from Homo sapiens (Human).